Here is a 354-residue protein sequence, read N- to C-terminus: Decorin (354 aa).

A signal peptide spans 1–16; that stretch reads MKATLVLFLLAQVSWA. A propeptide spanning residues 17-30 is cleaved from the precursor; that stretch reads GPFEQRGLFDFMLE. O-linked (Xyl...) (glycosaminoglycan) serine glycosylation occurs at S34. 2 disulfides stabilise this stretch: C49-C55 and C53-C62. LRR repeat units follow at residues 68–88, 89–112, 113–136, 137–157, 158–181, 182–207, 208–228, 229–252, 253–276, 277–299, 300–329, and 330–354; these read DKVP…NNKI, TEIK…NNKI, SKIS…KNHL, KELP…DNEI, TKLK…GNPL, KNSG…DTNI, TAIP…GNKI, AKVD…FNSI, TVVE…NNKL, LRVP…NNNI, SEVG…SNPV, and RYWQ…GNYK. A glycan (N-linked (GlcNAc...) asparagine) is linked at N206. N-linked (GlcNAc...) asparagine glycans are attached at residues N241, N257, and N298. The cysteines at positions 308 and 341 are disulfide-linked.

Belongs to the small leucine-rich proteoglycan (SLRP) family. SLRP class I subfamily. Binds to type I and type II collagen, fibronectin and TGF-beta. Forms a ternary complex with MFAP2 and ELN. Interacts with DPT. Post-translationally, the attached glycosaminoglycan chain can be either chondroitin sulfate or dermatan sulfate depending upon the tissue of origin.

The protein resides in the secreted. Its subcellular location is the extracellular space. It localises to the extracellular matrix. Functionally, may affect the rate of fibrils formation. May be implicated in the dilatation of the rat cervix. The polypeptide is Decorin (Dcn) (Rattus norvegicus (Rat)).